A 464-amino-acid chain; its full sequence is Fumarate hydratase class II 1 (464 aa).

Substrate-binding positions include 96–98 (SGT), 127–130 (HPND), 137–139 (SSN), and Thr185. His186 (proton donor/acceptor) is an active-site residue. Residue Ser316 is part of the active site. Residues Ser317 and 322–324 (KVN) contribute to the substrate site.

The protein belongs to the class-II fumarase/aspartase family. Fumarase subfamily. Homotetramer.

It is found in the cytoplasm. The enzyme catalyses (S)-malate = fumarate + H2O. It participates in carbohydrate metabolism; tricarboxylic acid cycle; (S)-malate from fumarate: step 1/1. Functionally, involved in the TCA cycle. Catalyzes the stereospecific interconversion of fumarate to L-malate. The polypeptide is Fumarate hydratase class II 1 (Pseudomonas aeruginosa (strain ATCC 15692 / DSM 22644 / CIP 104116 / JCM 14847 / LMG 12228 / 1C / PRS 101 / PAO1)).